The chain runs to 110 residues: Phosphoribosyl-ATP pyrophosphatase (110 aa).

The protein belongs to the PRA-PH family.

The protein localises to the cytoplasm. It catalyses the reaction 1-(5-phospho-beta-D-ribosyl)-ATP + H2O = 1-(5-phospho-beta-D-ribosyl)-5'-AMP + diphosphate + H(+). The protein operates within amino-acid biosynthesis; L-histidine biosynthesis; L-histidine from 5-phospho-alpha-D-ribose 1-diphosphate: step 2/9. The chain is Phosphoribosyl-ATP pyrophosphatase from Pseudomonas savastanoi pv. phaseolicola (strain 1448A / Race 6) (Pseudomonas syringae pv. phaseolicola (strain 1448A / Race 6)).